The primary structure comprises 317 residues: Transcriptional activator protein med (317 aa).

The first 17 residues, Met-1–Gly-17, serve as a signal peptide directing secretion. A lipid anchor (N-palmitoyl cysteine) is attached at Cys-18. Cys-18 carries the S-diacylglycerol cysteine lipid modification.

The protein belongs to the BMP lipoprotein family.

It is found in the cell membrane. Positive activator of the comK gene. The protein is Transcriptional activator protein med (med) of Bacillus subtilis (strain 168).